We begin with the raw amino-acid sequence, 254 residues long: Undecaprenyl-diphosphatase 3 (254 aa).

8 helical membrane passes run 8-28, 33-53, 74-94, 97-117, 133-153, 174-194, 207-227, and 233-253; these read TEFL…LIGF, AKVF…VIFW, LHII…HSAI, VLFG…LMIV, ITYK…WPGF, AEYT…LDLI, LFAT…VSFL, and VKLT…YFFI.

This sequence belongs to the UppP family.

It localises to the cell membrane. The enzyme catalyses di-trans,octa-cis-undecaprenyl diphosphate + H2O = di-trans,octa-cis-undecaprenyl phosphate + phosphate + H(+). Catalyzes the dephosphorylation of undecaprenyl diphosphate (UPP). Confers resistance to bacitracin. This Bacillus thuringiensis (strain Al Hakam) protein is Undecaprenyl-diphosphatase 3.